The chain runs to 177 residues: Large ribosomal subunit protein uL6 (177 aa).

The protein belongs to the universal ribosomal protein uL6 family. Part of the 50S ribosomal subunit.

This protein binds to the 23S rRNA, and is important in its secondary structure. It is located near the subunit interface in the base of the L7/L12 stalk, and near the tRNA binding site of the peptidyltransferase center. This is Large ribosomal subunit protein uL6 from Pasteurella multocida (strain Pm70).